Consider the following 238-residue polypeptide: MRHLHHQTSQTKLWAVIPAAGSGSRFSKTELKQYQYIQDATVIEHTVKRLSQLPLTGYVLAIGKQDTFASTLSFQDKHKAHFCNGGVERVHSVLNALNYLSQIADEDDWVLVHDAARPCVTFECLNTLVKNAIETNQSAILAIPVRDTLKQVNQEQQIEKTVSRELLWQAQTPQIAKIGILKKAIETALKNNLTITDEASALESIGESVQVVMGRSDNIKITYPDDLELARLILQSQN.

The protein belongs to the IspD/TarI cytidylyltransferase family. IspD subfamily.

It carries out the reaction 2-C-methyl-D-erythritol 4-phosphate + CTP + H(+) = 4-CDP-2-C-methyl-D-erythritol + diphosphate. The protein operates within isoprenoid biosynthesis; isopentenyl diphosphate biosynthesis via DXP pathway; isopentenyl diphosphate from 1-deoxy-D-xylulose 5-phosphate: step 2/6. Its function is as follows. Catalyzes the formation of 4-diphosphocytidyl-2-C-methyl-D-erythritol from CTP and 2-C-methyl-D-erythritol 4-phosphate (MEP). The protein is 2-C-methyl-D-erythritol 4-phosphate cytidylyltransferase of Acinetobacter baumannii (strain SDF).